The sequence spans 596 residues: Elongation factor 4 (596 aa).

Residues 2-184 form the tr-type G domain; that stretch reads KHIRNFSIIA…EIIAKIPPPV (183 aa). Residues 14–19 and 131–134 each bind GTP; these read DHGKST and NKID.

This sequence belongs to the TRAFAC class translation factor GTPase superfamily. Classic translation factor GTPase family. LepA subfamily.

The protein resides in the cell inner membrane. It catalyses the reaction GTP + H2O = GDP + phosphate + H(+). Its function is as follows. Required for accurate and efficient protein synthesis under certain stress conditions. May act as a fidelity factor of the translation reaction, by catalyzing a one-codon backward translocation of tRNAs on improperly translocated ribosomes. Back-translocation proceeds from a post-translocation (POST) complex to a pre-translocation (PRE) complex, thus giving elongation factor G a second chance to translocate the tRNAs correctly. Binds to ribosomes in a GTP-dependent manner. This chain is Elongation factor 4, found in Shewanella frigidimarina (strain NCIMB 400).